The chain runs to 365 residues: MSTLHKHNTPQMAAITLLGLLLVASSIEIAGAESIGVCYGMLGNNLPNHWEVIQLYKSRNIGRLRLYDPNHGALQALKGSNIEVMLGLPNSDVKHIASGMEHARWWVQKNVKDFWPDVKIKYIAVGNEISPVTGTSYLTSFLTPAMVNIYKAIGEAGLGNNIKVSTSVDMTLIGNSYPPSQGSFRNDARWFVDPIVGFLRDTRAPLLVNIYPYFSYSGNPGQISLPYSLFTAPNVVVQDGSRQYRNLFDAMLDSVYAALERSGGASVGIVVSESGWPSAGAFGATYDNAATYLKNLIQHAKEGSPRKPRPIETYIFAMFDENNKNPELEKHFGLFSPNKQPKYNLNFGVSGSVETNATASLISEI.

The N-terminal stretch at 1-32 (MSTLHKHNTPQMAAITLLGLLLVASSIEIAGA) is a signal peptide. The Proton donor role is filled by glutamate 128. Residue glutamate 273 is the Nucleophile of the active site. Residues 349-365 (VSGSVETNATASLISEI) constitute a propeptide, removed in mature form. Residue asparagine 356 is glycosylated (N-linked (GlcNAc...) asparagine).

The protein belongs to the glycosyl hydrolase 17 family.

It localises to the vacuole. It catalyses the reaction Hydrolysis of (1-&gt;3)-beta-D-glucosidic linkages in (1-&gt;3)-beta-D-glucans.. Functionally, implicated in the defense of plants against pathogens. This chain is Glucan endo-1,3-beta-glucosidase, basic vacuolar isoform (GN2), found in Nicotiana plumbaginifolia (Leadwort-leaved tobacco).